The primary structure comprises 483 residues: Glutamate--tRNA ligase (483 aa).

The short motif at 9 to 19 (PSPTGFLHIGN) is the 'HIGH' region element. A 'KMSKS' region motif is present at residues 253-257 (KLSKR). Lysine 256 contributes to the ATP binding site.

It belongs to the class-I aminoacyl-tRNA synthetase family. Glutamate--tRNA ligase type 1 subfamily. Monomer.

Its subcellular location is the cytoplasm. It carries out the reaction tRNA(Glu) + L-glutamate + ATP = L-glutamyl-tRNA(Glu) + AMP + diphosphate. Its function is as follows. Catalyzes the attachment of glutamate to tRNA(Glu) in a two-step reaction: glutamate is first activated by ATP to form Glu-AMP and then transferred to the acceptor end of tRNA(Glu). The sequence is that of Glutamate--tRNA ligase from Mycoplasma capricolum subsp. capricolum (strain California kid / ATCC 27343 / NCTC 10154).